The sequence spans 463 residues: HEPACAM family member 2 (463 aa).

A signal peptide spans 1 to 32 (MGQDAFMELLRSMVGLSLCKIHLLLIAGSCLG). Asn-86, Asn-130, and Asn-166 each carry an N-linked (GlcNAc...) asparagine glycan. Ig-like C2-type domains lie at 150 to 234 (PMVQ…SDII) and 236 to 332 (PTIY…TRFT). Disulfide bonds link Cys-171-Cys-220 and Cys-271-Cys-316. N-linked (GlcNAc...) asparagine glycosylation occurs at Asn-321. The helical transmembrane segment at 353 to 373 (LASITGISLFLIISMCLLFLW) threads the bilayer. Residues 374 to 463 (KKYQPYKAIR…IPEQQQENTE (90 aa)) are Cytoplasmic-facing.

Post-translationally, poly-ADP-ribosylated (PARsylated) by tankyrase TNKS during late G2 and prophase, leading to translocation to mitotic centrosomes. N-glycosylated.

The protein resides in the golgi apparatus membrane. It is found in the cytoplasm. The protein localises to the cytoskeleton. Its subcellular location is the spindle. It localises to the microtubule organizing center. The protein resides in the centrosome. It is found in the midbody. In terms of biological role, required during prometaphase for centrosome maturation. Following poly-ADP-ribosylation (PARsylation) by TNKS, translocates from the Golgi apparatus to mitotic centrosomes and plays a key role in the formation of robust microtubules for prompt movement of chromosomes: anchors AKAP9/CG-NAP, a scaffold protein of the gamma-tubulin ring complex and promotes centrosome maturation. This chain is HEPACAM family member 2 (Hepacam2), found in Mus musculus (Mouse).